The following is a 128-amino-acid chain: Large ribosomal subunit protein bL12 (128 aa).

This sequence belongs to the bacterial ribosomal protein bL12 family. Homodimer. Part of the ribosomal stalk of the 50S ribosomal subunit. Forms a multimeric L10(L12)X complex, where L10 forms an elongated spine to which 2 to 4 L12 dimers bind in a sequential fashion. Binds GTP-bound translation factors.

Functionally, forms part of the ribosomal stalk which helps the ribosome interact with GTP-bound translation factors. Is thus essential for accurate translation. This chain is Large ribosomal subunit protein bL12, found in Saccharopolyspora erythraea (strain ATCC 11635 / DSM 40517 / JCM 4748 / NBRC 13426 / NCIMB 8594 / NRRL 2338).